A 515-amino-acid polypeptide reads, in one-letter code: Cytochrome P450 1A1 (515 aa).

Residue phenylalanine 225 coordinates substrate. Residue cysteine 459 coordinates heme.

Belongs to the cytochrome P450 family. Heme is required as a cofactor.

It is found in the endoplasmic reticulum membrane. The protein localises to the microsome membrane. The catalysed reaction is an organic molecule + reduced [NADPH--hemoprotein reductase] + O2 = an alcohol + oxidized [NADPH--hemoprotein reductase] + H2O + H(+). Cytochromes P450 are a group of heme-thiolate monooxygenases. They oxidize a variety of structurally unrelated compounds, including steroids, fatty acids, and xenobiotics. The chain is Cytochrome P450 1A1 (cyp1a1) from Microgadus tomcod (Atlantic tomcod).